We begin with the raw amino-acid sequence, 208 residues long: Small ribosomal subunit protein uS4A (208 aa).

Positions 98-164 constitute an S4 RNA-binding domain; that stretch reads TRLDNVVYTL…AKIQSAIQAV (67 aa).

It belongs to the universal ribosomal protein uS4 family. As to quaternary structure, part of the 30S ribosomal subunit. Contacts protein S5. The interaction surface between S4 and S5 is involved in control of translational fidelity.

One of the primary rRNA binding proteins, it binds directly to 16S rRNA where it nucleates assembly of the body of the 30S subunit. Functionally, with S5 and S12 plays an important role in translational accuracy. This is Small ribosomal subunit protein uS4A from Bdellovibrio bacteriovorus (strain ATCC 15356 / DSM 50701 / NCIMB 9529 / HD100).